Consider the following 538-residue polypeptide: (R)-citramalate synthase (538 aa).

The Pyruvate carboxyltransferase domain maps to 3–268; that stretch reads IKVYDTTLRD…IPKENLKKLF (266 aa).

Belongs to the alpha-IPM synthase/homocitrate synthase family.

The catalysed reaction is pyruvate + acetyl-CoA + H2O = (3R)-citramalate + CoA + H(+). The protein operates within amino-acid biosynthesis; L-isoleucine biosynthesis; 2-oxobutanoate from pyruvate: step 1/3. Catalyzes the condensation of pyruvate and acetyl-coenzyme A to form (R)-citramalate. The protein is (R)-citramalate synthase of Thermotoga maritima (strain ATCC 43589 / DSM 3109 / JCM 10099 / NBRC 100826 / MSB8).